Reading from the N-terminus, the 358-residue chain is Bi-functional coumaroyl CoA and feruloyl CoA ortho-hydroxylase F6H2-2-1 (358 aa).

A Fe2OG dioxygenase domain is found at 200–308 (SKESLLMGSR…RISVPVFVNP (109 aa)). Position 216 (Tyr-216) interacts with 2-oxoglutarate. Residues His-231, Asp-233, and His-289 each contribute to the Fe cation site. 2-oxoglutarate-binding residues include Arg-299 and Ser-301.

It belongs to the iron/ascorbate-dependent oxidoreductase family. L-ascorbate is required as a cofactor. The cofactor is Fe(2+). Mostly expressed in underground stems and stems.

It catalyses the reaction (E)-4-coumaroyl-CoA + 2-oxoglutarate + O2 = (E)-2,4-dihydroxycinnamoyl-CoA + succinate + CO2. The enzyme catalyses (E)-feruloyl-CoA + 2-oxoglutarate + O2 = (E)-6-hydroxyferuloyl-CoA + succinate + CO2. It functions in the pathway phenylpropanoid metabolism. Functionally, 2-oxoglutarate (OG)- and Fe(II)-dependent dioxygenase (2OGD) involved in scopoletin and umbelliferone biosynthesis. Converts feruloyl CoA into 6'-hydroxyferuloyl CoA, and p-coumaroyl CoA into 2,4-dihydroxycinnamoyl-CoA, but has no activity toward caffeoyl-CoA. This is Bi-functional coumaroyl CoA and feruloyl CoA ortho-hydroxylase F6H2-2-1 from Ipomoea batatas (Sweet potato).